A 223-amino-acid polypeptide reads, in one-letter code: Urease accessory protein UreF (223 aa).

Belongs to the UreF family. In terms of assembly, ureD, UreF and UreG form a complex that acts as a GTP-hydrolysis-dependent molecular chaperone, activating the urease apoprotein by helping to assemble the nickel containing metallocenter of UreC. The UreE protein probably delivers the nickel.

The protein localises to the cytoplasm. Functionally, required for maturation of urease via the functional incorporation of the urease nickel metallocenter. The protein is Urease accessory protein UreF of Rhizobium etli (strain ATCC 51251 / DSM 11541 / JCM 21823 / NBRC 15573 / CFN 42).